The sequence spans 125 residues: Fluoride-specific ion channel FluC (125 aa).

4 helical membrane-spanning segments follow: residues 4-24, 32-52, 67-87, and 100-120; these read LMLV…TVTA, AFPW…GLLV, LLLA…SLDV, and LAYV…GLWL. Na(+)-binding residues include glycine 75 and threonine 78.

It belongs to the fluoride channel Fluc/FEX (TC 1.A.43) family.

It is found in the cell inner membrane. The catalysed reaction is fluoride(in) = fluoride(out). With respect to regulation, na(+) is not transported, but it plays an essential structural role and its presence is essential for fluoride channel function. In terms of biological role, fluoride-specific ion channel. Important for reducing fluoride concentration in the cell, thus reducing its toxicity. This chain is Fluoride-specific ion channel FluC, found in Chelativorans sp. (strain BNC1).